We begin with the raw amino-acid sequence, 145 residues long: MMHIDEILEYLPHRYPFLLVDRVTEVEKGKSIKGYKNVSFNEPFFTGHFPDNPIMPGVLIIEAMAQLSGILGFVTVERKPSDGVVQYLAGSSKARFKRPVLPGDRLDMESEFISGKRGIWKFDCRALVDGEVVCVAEILTAEREV.

Residue His-48 is part of the active site.

This sequence belongs to the thioester dehydratase family. FabZ subfamily.

It is found in the cytoplasm. The enzyme catalyses a (3R)-hydroxyacyl-[ACP] = a (2E)-enoyl-[ACP] + H2O. Its function is as follows. Involved in unsaturated fatty acids biosynthesis. Catalyzes the dehydration of short chain beta-hydroxyacyl-ACPs and long chain saturated and unsaturated beta-hydroxyacyl-ACPs. This is 3-hydroxyacyl-[acyl-carrier-protein] dehydratase FabZ from Marinobacter nauticus (strain ATCC 700491 / DSM 11845 / VT8) (Marinobacter aquaeolei).